A 423-amino-acid chain; its full sequence is Serine--tRNA ligase (423 aa).

229-231 contributes to the L-serine binding site; the sequence is TAE. 260–262 is an ATP binding site; the sequence is RKE. Glu283 contacts L-serine. 347–350 contributes to the ATP binding site; that stretch reads EISS. Residue Ser383 participates in L-serine binding.

This sequence belongs to the class-II aminoacyl-tRNA synthetase family. Type-1 seryl-tRNA synthetase subfamily. Homodimer. The tRNA molecule binds across the dimer.

The protein resides in the cytoplasm. It carries out the reaction tRNA(Ser) + L-serine + ATP = L-seryl-tRNA(Ser) + AMP + diphosphate + H(+). It catalyses the reaction tRNA(Sec) + L-serine + ATP = L-seryl-tRNA(Sec) + AMP + diphosphate + H(+). The protein operates within aminoacyl-tRNA biosynthesis; selenocysteinyl-tRNA(Sec) biosynthesis; L-seryl-tRNA(Sec) from L-serine and tRNA(Sec): step 1/1. Its function is as follows. Catalyzes the attachment of serine to tRNA(Ser). Is also able to aminoacylate tRNA(Sec) with serine, to form the misacylated tRNA L-seryl-tRNA(Sec), which will be further converted into selenocysteinyl-tRNA(Sec). This Syntrophotalea carbinolica (strain DSM 2380 / NBRC 103641 / GraBd1) (Pelobacter carbinolicus) protein is Serine--tRNA ligase.